A 329-amino-acid chain; its full sequence is Prostaglandin reductase 1 (329 aa).

Thr-18 carries the phosphothreonine modification. Ser-20 is modified (phosphoserine). Residues 152-155 (GAVG), Lys-178, Tyr-193, Asn-217, 239-245 (CGAISVY), 270-272 (FIV), and Asn-321 contribute to the NADP(+) site. Lys-178 carries the post-translational modification N6-(2-hydroxyisobutyryl)lysine; alternate. Lys-178 bears the N6-acetyllysine; alternate mark.

The protein belongs to the NADP-dependent oxidoreductase L4BD family. As to quaternary structure, monomer or homodimer. In terms of tissue distribution, detected in small intestine, kidney, liver, spleen and stomach (at protein level). Detected in small intestine, kidney and liver.

Its subcellular location is the cytoplasm. It catalyses the reaction 13,14-dihydro-15-oxo-prostaglandin E1 + NADP(+) = 15-oxoprostaglandin E1 + NADPH + H(+). It carries out the reaction 13,14-dihydro-15-oxo-prostaglandin E2 + NAD(+) = 15-oxoprostaglandin E2 + NADH + H(+). The catalysed reaction is 13,14-dihydro-15-oxo-prostaglandin F1alpha + NADP(+) = 15-oxoprostaglandin F1alpha + NADPH + H(+). The enzyme catalyses 13,14-dihydro-15-oxo-PGF2alpha + NADP(+) = 15-oxoprostaglandin F2alpha + NADPH + H(+). It catalyses the reaction leukotriene B4 + NADP(+) = 12-oxo-leukotriene B4 + NADPH + H(+). It carries out the reaction 20-hydroxy-leukotriene B4 + NADP(+) = 12-oxo-20-hydroxy-leukotriene B4 + NADPH + H(+). The catalysed reaction is 6-trans-leukotriene B4 + NADP(+) = 12-oxo-(5S)-hydroxy-(6E,8E,10E,14Z)-eicosatetraenoate + NADPH + H(+). The enzyme catalyses (5S,12S)-dihydroxy-(6E,10E,12E,14Z)-eicosatetraenoate + NADP(+) = 12-oxo-(5S)-hydroxy-(6E,8E,10E,14Z)-eicosatetraenoate + NADPH + H(+). It catalyses the reaction an n-alkanal + NADP(+) = an alk-2-enal + NADPH + H(+). It carries out the reaction hexanal + NADP(+) = (E)-hex-2-enal + NADPH + H(+). The catalysed reaction is octanal + NADP(+) = (2E)-octenal + NADPH + H(+). The enzyme catalyses decanal + NADP(+) = (2E)-decenal + NADPH + H(+). It catalyses the reaction dodecanal + NADP(+) = (2E)-dodecenal + NADPH + H(+). It carries out the reaction 4-hydroxynonanal + NADP(+) = (E)-4-hydroxynon-2-enal + NADPH + H(+). The catalysed reaction is pentan-2-one + NADP(+) = (E)-pent-3-en-2-one + NADPH + H(+). The enzyme catalyses nonan-2-one + NADP(+) = (3E)-nonen-2-one + NADPH + H(+). NAD(P)H-dependent oxidoreductase involved in metabolic inactivation of pro- and anti-inflammatory eicosanoids: prostaglandins (PG), leukotrienes (LT) and lipoxins (LX). Catalyzes with high efficiency the reduction of the 13,14 double bond of 15-oxoPGs, including 15-oxo-PGE1, 15-oxo-PGE2, 15-oxo-PGF1-alpha and 15-oxo-PGF2-alpha. Catalyzes with lower efficiency the oxidation of the hydroxyl group at C12 of LTB4 and its derivatives, converting them into biologically less active 12-oxo-LTB4 metabolites. Reduces 15-oxo-LXA4 to 13,14 dihydro-15-oxo-LXA4, enhancing neutrophil recruitment at the inflammatory site. Plays a role in metabolic detoxification of alkenals and ketones. Reduces alpha,beta-unsaturated alkenals and ketones, particularly those with medium-chain length, showing highest affinity toward (2E)-decenal and (3E)-3-nonen-2-one. May inactivate 4-hydroxy-2-nonenal, a cytotoxic lipid constituent of oxidized low-density lipoprotein particles. The protein is Prostaglandin reductase 1 (Ptgr1) of Cavia porcellus (Guinea pig).